Here is a 328-residue protein sequence, read N- to C-terminus: MKCGNREIFVKTQESTNPEWGKPPSKRTTEEYIRYSLVLIDKPRGPSSHEVAAWVKKILGVERAGHAGTLDPKVSGVLPIAVAEGTKALLALSRSDKVYVAVAKFHGDVDEEKLKAVLNEFQGVIYQKPPLRSSVKRQLRTRHVYSLELLELDGRYAVIKMHVEAGTYARKLIHDIGEVLGVGANMRELRRIAVSCYTEDETVALQDVADAYYIWRRYGDDTYLRRVLLPIEEIARHLPKIWVRDSAVDALCNGAPLAAPGVVKFETPFSKGELVAFFTLKDELIGFGRALVESEEAKKMERGLVARVDRVIMRRGTYPPMWKRKQQT.

The active-site Nucleophile is Asp71. The region spanning 238–313 (LPKIWVRDSA…LVARVDRVIM (76 aa)) is the PUA domain.

The protein belongs to the pseudouridine synthase TruB family. Type 2 subfamily.

It carries out the reaction uridine(55) in tRNA = pseudouridine(55) in tRNA. Functionally, could be responsible for synthesis of pseudouridine from uracil-55 in the psi GC loop of transfer RNAs. This is Probable tRNA pseudouridine synthase B from Pyrobaculum islandicum (strain DSM 4184 / JCM 9189 / GEO3).